Reading from the N-terminus, the 653-residue chain is Potassium voltage-gated channel subfamily A member 4 (653 aa).

The Cytoplasmic portion of the chain corresponds to 1–304 (MEVAMVSAES…LLFEYPESSS (304 aa)). Residues 24 to 148 (QARARERERL…RFYYSEDDHG (125 aa)) form a disordered region. The segment covering 36-52 (SRAAAAAAVAAATAAVE) has biased composition (low complexity). Basic residues predominate over residues 81–97 (GSRRRRRQRSEKKKAHY). Position 90 is a phosphoserine; by PKA (serine 90). Residue serine 122 is modified to Phosphoserine. The span at 122–137 (SEEEEDEEEEEEEEEE) shows a compositional bias: acidic residues. Residues 305–326 (PARGIAIVSVLVILISIVIFCL) form a helical membrane-spanning segment. The Extracellular portion of the chain corresponds to 327–370 (ETLPEFRDDRDLVMALSAGGHGGLLNDTSAPHLENSGHTIFNDP). The N-linked (GlcNAc...) asparagine glycan is linked to asparagine 352. The helical transmembrane segment at 371–392 (FFIVETVCIVWFSFEFVVRCFA) threads the bilayer. Topologically, residues 393 to 403 (CPSQALFFKNI) are cytoplasmic. The helical transmembrane segment at 404–424 (MNIIDIVSILPYFITLGTDLA) threads the bilayer. Residues 425-439 (QQQGGGNGQQQQAMS) are Extracellular-facing. The helical; Voltage-sensor transmembrane segment at 440–460 (FAILRIIRLVRVFRIFKLSRH) threads the bilayer. Topologically, residues 461–475 (SKGLQILGHTLRASM) are cytoplasmic. The interval 462 to 475 (KGLQILGHTLRASM) is S4-S5 linker. A helical transmembrane segment spans residues 476-497 (RELGLLIFFLFIGVILFSSAVY). The Extracellular portion of the chain corresponds to 498–511 (FAEADEPTTHFQSI). Positions 512–523 (PDAFWWAVVTMT) form an intramembrane region, helical. Positions 524-529 (TVGYGD) match the Selectivity filter motif. The stretch at 524–531 (TVGYGDMK) is an intramembrane region. Topologically, residues 532–538 (PITVGGK) are extracellular. The helical transmembrane segment at 539–567 (IVGSLCAIAGVLTIALPVPVIVSNFNYFY) threads the bilayer. Topologically, residues 568-653 (HRETENEEQT…SNAKAVETDV (86 aa)) are cytoplasmic. Serine 599 carries the post-translational modification Phosphoserine; by PKA. The span at 629 to 640 (CQGKGDDSETDK) shows a compositional bias: basic and acidic residues. The disordered stretch occupies residues 629–653 (CQGKGDDSETDKNNCSNAKAVETDV). Positions 651 to 653 (TDV) match the PDZ-binding motif.

Belongs to the potassium channel family. A (Shaker) (TC 1.A.1.2) subfamily. Kv1.4/KCNA4 sub-subfamily. In terms of assembly, homotetramer and heterotetramer of potassium channel proteins. Interacts with KCNAB1 and KCNAB2. Interacts with DLG1, DLG2 and DLG4 via their PDZ domains. Interacts with SIGMAR1. Detected in a complex with KCNA1. Interacts with KCNA2. Part of a complex containing KCNA1, KCNAB1 and LGI1. Interacts (via cytoplasmic N-terminal domain) with KCNRG. As to expression, expressed in brain, and at lower levels in the testis, lung, kidney, colon and heart. Detected in heart ventricle.

It localises to the cell membrane. The protein resides in the cell projection. The protein localises to the axon. It catalyses the reaction K(+)(in) = K(+)(out). Inhibited by 4-aminopyridine (4-AP), but not by tetraethylammonium (TEA) and charybdotoxin (CTX). In terms of biological role, voltage-gated potassium channel that mediates transmembrane potassium transport in excitable membranes. Forms tetrameric potassium-selective channels through which potassium ions pass in accordance with their electrochemical gradient. The channel alternates between opened and closed conformations in response to the voltage difference across the membrane. Can form functional homotetrameric channels and heterotetrameric channels that contain variable proportions of KCNA1, KCNA2, KCNA4, KCNA5, and possibly other family members as well; channel properties depend on the type of alpha subunits that are part of the channel. Channel properties are modulated by cytoplasmic beta subunits that regulate the subcellular location of the alpha subunits and promote rapid inactivation. In vivo, membranes probably contain a mixture of heteromeric potassium channel complexes, making it difficult to assign currents observed in intact tissues to any particular potassium channel family member. Homotetrameric KCNA4 forms a potassium channel that opens in response to membrane depolarization, followed by rapid spontaneous channel closure. Likewise, a heterotetrameric channel formed by KCNA1 and KCNA4 shows rapid inactivation. This is Potassium voltage-gated channel subfamily A member 4 (KCNA4) from Homo sapiens (Human).